A 200-amino-acid chain; its full sequence is Lipopolysaccharide core heptose(II)-phosphate phosphatase (200 aa).

The first 25 residues, 1–25, serve as a signal peptide directing secretion; that stretch reads MLAFCRSSLKSKKYFIILLALAAIA.

This sequence belongs to the phosphoglycerate mutase family. Ais subfamily.

Its subcellular location is the periplasm. Its pathway is bacterial outer membrane biogenesis; lipopolysaccharide metabolism. Its function is as follows. Catalyzes the dephosphorylation of heptose(II) of the outer membrane lipopolysaccharide core. This chain is Lipopolysaccharide core heptose(II)-phosphate phosphatase, found in Shigella flexneri serotype 5b (strain 8401).